Consider the following 385-residue polypeptide: Cellulase CelDZ1 (385 aa).

The helical transmembrane segment at 6–26 threads the bilayer; that stretch reads INKWYFFVGMLVIFAVIISLI. Substrate-binding positions include histidine 87, 91 to 92, tyrosine 118, and histidine 153; that span reads WF. The active-site Proton donor is the glutamate 192. Tyrosine 261 is a binding site for substrate. Glutamate 294 functions as the Nucleophile in the catalytic mechanism. Substrate-binding positions include 300 to 301, tryptophan 328, and 333 to 335; these read AS and KNE.

The protein belongs to the glycosyl hydrolase 5 (cellulase A) family. As to quaternary structure, monomer.

It is found in the cell membrane. It carries out the reaction Endohydrolysis of (1-&gt;4)-beta-D-glucosidic linkages in cellulose, lichenin and cereal beta-D-glucans.. With respect to regulation, activity is enhanced by 1mM Mn(2+), but is not affected by 1mM Ca(2+), Mg(2+), Zn(2+), K(+), Na(+) or Li(+). Activity is not inhibited by EDTA (in vitro). Its function is as follows. Thermostable endoglucanase that has high activity with soluble polymeric substrates containing beta-1,4-glycosidic bonds, such as carboxymethyl cellulose (CMC) and barley beta-D-glucan (in vitro). Has no activity with cellobiose and filter paper. Has no activity with substrates containing beta-1,3-linked glycans, such as laminarin. Likewise, lacks activity with xylan, galactomannan and pectin. This Thermoanaerobacterium sp protein is Cellulase CelDZ1.